The sequence spans 384 residues: G protein-coupled receptor 88 (384 aa).

The Extracellular portion of the chain corresponds to 1 to 35 (MTNSSSTSTSTTTGGSLLLLCEEEESWAGRRIPVS). N-linked (GlcNAc...) asparagine glycosylation is present at asparagine 3. Residues 36-56 (LLYSGLAIGGTLANGMVIYLV) traverse the membrane as a helical segment. The Cytoplasmic segment spans residues 57-73 (SSFRKLQTTSNAFIVNG). A helical transmembrane segment spans residues 74-94 (CAADLSVCALWMPQEAVLGLL). Topologically, residues 95–116 (PSGSAEPPGDWDGGGGSYRLLR) are extracellular. Residues 117-136 (GGLLGLGLTVSLLSHCLVAL) traverse the membrane as a helical segment. Over 137–158 (NRYLLITRAPATYQVLYQRRHT) the chain is Cytoplasmic. Residues 159 to 179 (VGMLALSWALALGLVLLLPPW) form a helical membrane-spanning segment. Over 180 to 195 (APKPGAEPPQVHYPAL) the chain is Extracellular. A helical transmembrane segment spans residues 196–216 (LAAGALLAQTALLLHCYLGIV). Over 217-285 (RRVRVSVKRV…RAQRRLSGLS (69 aa)) the chain is Cytoplasmic. The chain crosses the membrane as a helical span at residues 286 to 306 (VLLLCCVFLLATQPLVWVSLA). Over 307 to 310 (SGFS) the chain is Extracellular. A helical transmembrane segment spans residues 311–331 (LPVPWGVQAASWLLCCALSAL). The Cytoplasmic segment spans residues 332-384 (NPLLYTWRNEEFRRSVRSVLPGVGDAAAAAAAATAVPAMSQAQLGTRAAGQHW).

Belongs to the G-protein coupled receptor 1 family. In terms of tissue distribution, expressed predominantly in the striatum.

The protein localises to the cell membrane. The protein resides in the cell projection. Its subcellular location is the cilium membrane. It is found in the cytoplasm. It localises to the nucleus. Its function is as follows. Orphan G protein-coupled receptor implicated in a large repertoire of behavioral responses that engage motor activities, spatial learning, and emotional processing. May play a role in the regulation of cognitive and motor function. Couples with the heterotrimeric G protein complex of the G(i) subfamily, consisting of GNAI1, GNB1 and GNG2, thereby acting through a G(i)-mediated pathway. Plays a role in the attenuation of D1 dopamine receptor (D1R)-mediated cAMP response in ciliated cells. In on-ciliated cells, involved in the inhibition of the beta-2 adrenergic receptor (B2AR) response. The chain is G protein-coupled receptor 88 (Gpr88) from Mus musculus (Mouse).